A 546-amino-acid chain; its full sequence is T-complex protein 1 subunit epsilon (546 aa).

It belongs to the TCP-1 chaperonin family. Heterooligomeric complex of about 850 to 900 kDa that forms two stacked rings, 12 to 16 nm in diameter.

The protein resides in the cytoplasm. In terms of biological role, molecular chaperone; assists the folding of proteins upon ATP hydrolysis. Known to play a role, in vitro, in the folding of actin and tubulin. The chain is T-complex protein 1 subunit epsilon (cct5) from Schizosaccharomyces pombe (strain 972 / ATCC 24843) (Fission yeast).